The chain runs to 549 residues: Cation/acetate symporter ActP (549 aa).

Helical transmembrane passes span 33-53 (WQAI…TYWA), 77-97 (LAIA…ALVF), 103-123 (GLIY…LIAE), 148-168 (ILSA…QMVG), 183-203 (IAVV…GMLA), 206-226 (WVQI…AFMV), 262-282 (ISAL…PHIL), 303-323 (GFMG…IMLV), 355-375 (LFLG…VAGL), 404-424 (VSKI…VLFE), 428-448 (IAFM…PIIL), 464-484 (GGWL…TIWV), and 493-513 (IFPY…GIWF).

This sequence belongs to the sodium:solute symporter (SSF) (TC 2.A.21) family.

It localises to the cell inner membrane. Functionally, transports acetate. This Escherichia coli O6:K15:H31 (strain 536 / UPEC) protein is Cation/acetate symporter ActP.